The primary structure comprises 232 residues: Lipoprotein-releasing system ATP-binding protein LolD (232 aa).

The ABC transporter domain maps to 11-231 (VYLHDIKREY…SLENGHVVEL (221 aa)). Residue 47–54 (APSGSGKS) participates in ATP binding.

It belongs to the ABC transporter superfamily. Lipoprotein translocase (TC 3.A.1.125) family. In terms of assembly, the complex is composed of two ATP-binding proteins (LolD) and two transmembrane proteins (LolC and LolE).

The protein resides in the cell inner membrane. Its function is as follows. Part of the ABC transporter complex LolCDE involved in the translocation of mature outer membrane-directed lipoproteins, from the inner membrane to the periplasmic chaperone, LolA. Responsible for the formation of the LolA-lipoprotein complex in an ATP-dependent manner. This chain is Lipoprotein-releasing system ATP-binding protein LolD, found in Nitrobacter winogradskyi (strain ATCC 25391 / DSM 10237 / CIP 104748 / NCIMB 11846 / Nb-255).